A 278-amino-acid chain; its full sequence is Rhamnulose-1-phosphate aldolase (278 aa).

Residue Glu-116 is part of the active site. Zn(2+)-binding residues include His-139, His-141, and His-210.

Belongs to the aldolase class II family. RhaD subfamily. Zn(2+) is required as a cofactor.

It localises to the cytoplasm. The catalysed reaction is L-rhamnulose 1-phosphate = (S)-lactaldehyde + dihydroxyacetone phosphate. The protein operates within carbohydrate degradation; L-rhamnose degradation; glycerone phosphate from L-rhamnose: step 3/3. Functionally, catalyzes the reversible cleavage of L-rhamnulose-1-phosphate to dihydroxyacetone phosphate (DHAP) and L-lactaldehyde. The chain is Rhamnulose-1-phosphate aldolase from Listeria welshimeri serovar 6b (strain ATCC 35897 / DSM 20650 / CCUG 15529 / CIP 8149 / NCTC 11857 / SLCC 5334 / V8).